We begin with the raw amino-acid sequence, 805 residues long: Leucine--tRNA ligase (805 aa).

The 'HIGH' region signature appears at 40–51; that stretch reads PYPSGQGLHVGH. The short motif at 577 to 581 is the 'KMSKS' region element; the sequence is KMSKS. K580 is a binding site for ATP.

Belongs to the class-I aminoacyl-tRNA synthetase family.

It localises to the cytoplasm. The catalysed reaction is tRNA(Leu) + L-leucine + ATP = L-leucyl-tRNA(Leu) + AMP + diphosphate. This is Leucine--tRNA ligase from Pediococcus pentosaceus (strain ATCC 25745 / CCUG 21536 / LMG 10740 / 183-1w).